The following is a 491-amino-acid chain: Synaptotagmin-9 (491 aa).

Residues 1–52 (MPGARDALCHQALQLLAELCARGALEHDSCQDFIYHLRDRARPRLRDPDISV) are Vesicular-facing. Residues 9 to 31 (CHQALQLLAELCARGALEHDSCQ) are cysteine motif. Residues 53–73 (SLLTLVVTACGLALFGVSLFV) traverse the membrane as a helical segment. The Cytoplasmic segment spans residues 74–491 (SWKLCWVPWR…AHWHSLLEKR (418 aa)). Polar residues predominate over residues 91-104 (SKDNNQEPLNYTDT). Residues 91–147 (SKDNNQEPLNYTDTETNEQENSEDFLDPPTPCPDSSMKISHTSPDIPLSTQPGGQDN) form a disordered region. A compositionally biased stretch (acidic residues) spans 105–116 (ETNEQENSEDFL). Residues 127–144 (MKISHTSPDIPLSTQPGG) are compositionally biased toward polar residues. S177 carries the post-translational modification Phosphoserine. 2 C2 domains span residues 220 to 341 (ACGK…ILWK) and 352 to 485 (DLGE…AHWH). D251, D257, D309, F310, D311, S314, D317, D383, D389, D443, and D445 together coordinate Ca(2+).

It belongs to the synaptotagmin family. In terms of assembly, homodimer; disulfide-linked via the cysteine motif. Can also form heterodimers with SYT3, SYT6, SYT7 and SYT10. The cofactor is Ca(2+).

Its subcellular location is the cytoplasmic vesicle. The protein resides in the secretory vesicle. The protein localises to the synaptic vesicle membrane. Its function is as follows. May be involved in Ca(2+)-dependent exocytosis of secretory vesicles through Ca(2+) and phospholipid binding to the C2 domain or may serve as Ca(2+) sensors in the process of vesicular trafficking and exocytosis. The chain is Synaptotagmin-9 (Syt9) from Rattus norvegicus (Rat).